We begin with the raw amino-acid sequence, 1434 residues long: Pleiotropic drug resistance protein 1 (1434 aa).

The tract at residues 1–22 (MEPANLSNLRGSSLRGSTRGSL) is disordered. The 274-residue stretch at 161–434 (LNSLHILSSR…FESMGFKCPQ (274 aa)) folds into the ABC transporter 1 domain. 194-201 (GPPSSGKT) contacts ATP. An ABC transmembrane type-2 1 domain is found at 512 to 725 (ELLKVCTERE…SVNSILVNEF (214 aa)). A run of 7 helical transmembrane segments spans residues 530 to 550 (FVYM…MTLF), 563 to 583 (GGIY…NGMS), 618 to 638 (IPVT…VIGF), 649 to 669 (FLLL…IGAV), 675 to 695 (VAST…GFVL), 702 to 722 (SWWI…SILV), and 760 to 780 (IGVG…SLAL). The disordered stretch occupies residues 793-824 (LPEDGENAENGEVSSQITSTDGGDSISESQNN). The span at 804-824 (EVSSQITSTDGGDSISESQNN) shows a compositional bias: polar residues. The 253-residue stretch at 837–1089 (ITFDDVVYSV…HLIKYFESNP (253 aa)) folds into the ABC transporter 2 domain. 882–889 (GVSGAGKT) is a binding site for ATP. One can recognise an ABC transmembrane type-2 2 domain in the interval 1162 to 1376 (TQCVACLWKQ…TLYGLVASQF (215 aa)). A run of 7 helical transmembrane segments spans residues 1181-1201 (YTAV…TMFW), 1221-1241 (YAAV…VVAI), 1269-1289 (IPYI…MIGF), 1296-1316 (FFWY…YGMM), 1326-1346 (VASI…GFII), 1357-1377 (WYYW…SQFG), and 1406-1426 (VVAA…AFAI).

It belongs to the ABC transporter superfamily. ABCG family. PDR (TC 3.A.1.205) subfamily.

It is found in the membrane. Its function is as follows. May be a general defense protein. This is Pleiotropic drug resistance protein 1 (PDR1) from Nicotiana tabacum (Common tobacco).